Reading from the N-terminus, the 575-residue chain is uncharacterized protein (575 aa).

The disordered stretch occupies residues 507–536 (AHRKVGELNNKKPMTGEKPPPKNKKSPKYK).

This is an uncharacterized protein from Ostreid herpesvirus 1 (isolate France) (OsHV-1).